A 95-amino-acid polypeptide reads, in one-letter code: Ribonuclease kappa-B (95 aa).

2 consecutive transmembrane segments (helical) span residues 12–32 and 68–88; these read GLII…FFYI and CWIA…QFYV.

It belongs to the RNase K family.

It is found in the membrane. With respect to regulation, inhibited by Zn(2+) and Hg(2+), while it is unaffected by Ca(2+). In terms of biological role, endoribonuclease which displays activity against poly(C) and poly(U) synthetic substrates, as well as rRNA. This is Ribonuclease kappa-B from Ceratitis capitata (Mediterranean fruit fly).